We begin with the raw amino-acid sequence, 65 residues long: Small ribosomal subunit protein eS27 (65 aa).

Zn(2+) contacts are provided by cysteine 20, cysteine 23, cysteine 39, and cysteine 42. The C4-type zinc finger occupies 20 to 42 (CIDCGNEQIVFSHPATRVRCNVC).

It belongs to the eukaryotic ribosomal protein eS27 family. In terms of assembly, part of the 30S ribosomal subunit. It depends on Zn(2+) as a cofactor.

This Pyrococcus abyssi (strain GE5 / Orsay) protein is Small ribosomal subunit protein eS27.